A 158-amino-acid chain; its full sequence is 2-C-methyl-D-erythritol 2,4-cyclodiphosphate synthase (158 aa).

Positions 9 and 11 each coordinate a divalent metal cation. Residues aspartate 9–histidine 11 and histidine 35–serine 36 each bind 4-CDP-2-C-methyl-D-erythritol 2-phosphate. Histidine 43 contributes to the a divalent metal cation binding site. Residues aspartate 57 to glycine 59, phenylalanine 62 to aspartate 66, threonine 133 to glutamate 136, phenylalanine 140, and arginine 143 each bind 4-CDP-2-C-methyl-D-erythritol 2-phosphate.

It belongs to the IspF family. Homotrimer. The cofactor is a divalent metal cation.

The catalysed reaction is 4-CDP-2-C-methyl-D-erythritol 2-phosphate = 2-C-methyl-D-erythritol 2,4-cyclic diphosphate + CMP. It functions in the pathway isoprenoid biosynthesis; isopentenyl diphosphate biosynthesis via DXP pathway; isopentenyl diphosphate from 1-deoxy-D-xylulose 5-phosphate: step 4/6. Functionally, involved in the biosynthesis of isopentenyl diphosphate (IPP) and dimethylallyl diphosphate (DMAPP), two major building blocks of isoprenoid compounds. Catalyzes the conversion of 4-diphosphocytidyl-2-C-methyl-D-erythritol 2-phosphate (CDP-ME2P) to 2-C-methyl-D-erythritol 2,4-cyclodiphosphate (ME-CPP) with a corresponding release of cytidine 5-monophosphate (CMP). The protein is 2-C-methyl-D-erythritol 2,4-cyclodiphosphate synthase of Haemophilus influenzae (strain 86-028NP).